A 537-amino-acid chain; its full sequence is Phosphoenolpyruvate carboxykinase (ATP) (537 aa).

Substrate contacts are provided by Arg-61, Tyr-194, and Lys-200. Residues Lys-200, His-219, and 235–243 (GLSGTGKTT) contribute to the ATP site. Mn(2+) is bound by residues Lys-200 and His-219. A Mn(2+)-binding site is contributed by Asp-256. ATP-binding residues include Glu-284, Arg-322, and Thr-448. Position 322 (Arg-322) interacts with substrate.

It belongs to the phosphoenolpyruvate carboxykinase (ATP) family. Requires Mn(2+) as cofactor.

The protein localises to the cytoplasm. The catalysed reaction is oxaloacetate + ATP = phosphoenolpyruvate + ADP + CO2. It functions in the pathway carbohydrate biosynthesis; gluconeogenesis. Functionally, involved in the gluconeogenesis. Catalyzes the conversion of oxaloacetate (OAA) to phosphoenolpyruvate (PEP) through direct phosphoryl transfer between the nucleoside triphosphate and OAA. This is Phosphoenolpyruvate carboxykinase (ATP) from Bradyrhizobium sp. (strain BTAi1 / ATCC BAA-1182).